A 104-amino-acid chain; its full sequence is Zinc finger C2H2 protein ECU02_0310 (104 aa).

The C2H2-type zinc finger occupies 56–80; the sequence is FYCCECDRHFITEKVLMEHKRSNPH.

The protein belongs to the ZNF593/BUD20 C2H2-type zinc-finger protein family. Associates with pre-60S ribosomal particles; released from the pre-60S particle very early in the cytoplasm.

The protein resides in the nucleus. Its subcellular location is the cytoplasm. Its function is as follows. Involved in pre-60S ribosomal particles maturation by promoting the nuclear export of the 60S ribosome. This Encephalitozoon cuniculi (strain GB-M1) (Microsporidian parasite) protein is Zinc finger C2H2 protein ECU02_0310.